We begin with the raw amino-acid sequence, 137 residues long: Proofreading thioesterase EntH (137 aa).

Glu63 (nucleophile or proton acceptor) is an active-site residue.

The protein belongs to the thioesterase PaaI family. In terms of assembly, homotetramer. Dimer of dimers. Interacts specifically with the aryl carrier protein (ArCP) domain of EntB.

Its subcellular location is the cytoplasm. The protein operates within siderophore biosynthesis; enterobactin biosynthesis. Required for optimal enterobactin synthesis. Acts as a proofreading enzyme that prevents EntB misacylation by hydrolyzing the thioester bound existing between EntB and wrongly charged molecules. The protein is Proofreading thioesterase EntH of Salmonella paratyphi B (strain ATCC BAA-1250 / SPB7).